The primary structure comprises 182 residues: MSDKTVKSTNLMAFVATKMLERQEDLDTCTEMQVEKMKTSTKARLRTESSFAPRTWEDAIKDEILRRSVDTSSLNKWPELKQELENVSDALKADSLWLPMKSLSLYSRVSNQEPSSIPIGEMKHQILTRLKLICSRLEKLDLNLSKAVLGIQNSEDLILIIYNRDICKNTILMIKSLCNSLI.

2 short sequence motifs (nuclear export signal) span residues 96 to 105 (LWLPMKSLSL) and 122 to 132 (MKHQILTRLKL).

The protein belongs to the influenza viruses NEP family. In terms of assembly, interacts with protein M1. May interact with host nucleoporin RAB/HRB and exportin XPO1/CRM1.

It localises to the virion. The protein resides in the host nucleus. In terms of biological role, mediates the nuclear export of encapsidated genomic RNAs (ribonucleoproteins, RNPs). Acts as an adapter between viral RNPs complexes and the nuclear export machinery of the cell. Possesses no intrinsic RNA-binding activity, but includes a C-terminal M1-binding domain. This domain is believed to allow recognition of RNPs bound to the protein M1. Since protein M1 is not available in large quantities before late stages of infection, such an indirect recognition mechanism probably ensures that genomic RNPs are not exported from the host nucleus until sufficient quantities of viral mRNA and progeny genomic RNA have been synthesized. Furthermore, the RNPs enter the host cytoplasm only when associated with the M1 protein that is necessary to guide them to the plasma membrane. May down-regulate viral RNA synthesis when overproduced. The polypeptide is Nuclear export protein (Homo sapiens (Human)).